The primary structure comprises 284 residues: Tropomyosin (284 aa).

Positions 1–284 form a coiled coil; it reads MDAIKKKMQA…DMTFTELIGN (284 aa).

It belongs to the tropomyosin family. In terms of assembly, homodimer.

Its function is as follows. Tropomyosin, in association with the troponin complex, plays a central role in the calcium dependent regulation of muscle contraction. The protein is Tropomyosin of Blattella germanica (German cockroach).